The primary structure comprises 35 residues: Photosystem II reaction center protein T (35 aa).

A helical transmembrane segment spans residues alanine 3–phenylalanine 23.

This sequence belongs to the PsbT family. As to quaternary structure, PSII is composed of 1 copy each of membrane proteins PsbA, PsbB, PsbC, PsbD, PsbE, PsbF, PsbH, PsbI, PsbJ, PsbK, PsbL, PsbM, PsbT, PsbY, PsbZ, Psb30/Ycf12, at least 3 peripheral proteins of the oxygen-evolving complex and a large number of cofactors. It forms dimeric complexes.

It is found in the plastid. The protein localises to the chloroplast thylakoid membrane. Functionally, found at the monomer-monomer interface of the photosystem II (PS II) dimer, plays a role in assembly and dimerization of PSII. PSII is a light-driven water plastoquinone oxidoreductase, using light energy to abstract electrons from H(2)O, generating a proton gradient subsequently used for ATP formation. In Saururus cernuus (Lizard's tail), this protein is Photosystem II reaction center protein T.